A 1495-amino-acid polypeptide reads, in one-letter code: ABC transporter C family member 12 (1495 aa).

11 helical membrane passes run 38–58 (VMLVSHFVLLGLCFYRIWIIF), 76–96 (VLGLLACYCVVEPVLRLVMGI), 110–130 (FEVASLMVEAFAWFSMLVLIG), 146–166 (FGVLYVLVADAVLLDLVLPLK), 173–195 (ALYLFISSRCSQALFGILLLIYI), 303–323 (FWLAGIFKIGNDLSQFVGPVI), 337–357 (AWVGYVYAFIIFVGVTLGVLC), 420–440 (GLWSAPFRIIVSMILLYQQLG), 441–461 (VASLFGSLILFLLIPLQTLII), 528–548 (FILNSIPVVVTVVSFGVFVLL), and 558–578 (FTSLSLFAVLRFPLNMLPNLL). The 281-residue stretch at 303 to 583 (FWLAGIFKIG…LPNLLSQVVN (281 aa)) folds into the ABC transmembrane type-1 1 domain. The region spanning 615-839 (ISIKNGYFSW…GILFKKLMEN (225 aa)) is the ABC transporter 1 domain. ATP is bound at residue 650–657 (GGTGEGKT). Helical transmembrane passes span 907–927 (AVGGLWVVMILLACYLATEVL), 949–969 (PGFYIVVYALLGFGQVAVTFT), 1042–1062 (FALIGTVSTISLWAIMPLLIL), 1140–1160 (LETLGGVMIWLTATFAVLQNG), and 1166–1186 (AGFASTMGLLLSYTLNITSLL). Residues 914-1198 (VMILLACYLA…VLRQASRAEN (285 aa)) enclose the ABC transmembrane type-1 2 domain. An ABC transporter 2 domain is found at 1235 to 1469 (IKFEDVHLRY…DTSAFFRMVH (235 aa)). ATP is bound at residue 1269–1276 (GRTGAGKS).

It belongs to the ABC transporter superfamily. ABCC family. Conjugate transporter (TC 3.A.1.208) subfamily. As to expression, ubiquitous.

It is found in the membrane. The enzyme catalyses ATP + H2O + xenobioticSide 1 = ADP + phosphate + xenobioticSide 2.. Functionally, pump for glutathione S-conjugates. The sequence is that of ABC transporter C family member 12 (ABCC12) from Arabidopsis thaliana (Mouse-ear cress).